Consider the following 778-residue polypeptide: uncharacterized protein (778 aa).

One can recognise a PE domain in the interval 1-92 (MSFVIAVPEA…GARSYVVAEA (92 aa)). Disordered regions lie at residues 125–163 (ADGTGAPGGPGGLLLGNGGNGGSGAPGQPGGAGGDAGLI), 372–510 (TGLA…GDAF), and 718–778 (QGGL…GADG). 3 stretches are compositionally biased toward gly residues: residues 402–429 (NQTGGNGGPGPAGGVGEAGGVGGQGGLG), 436–510 (DGTG…GDAF), and 718–763 (QGGL…GSSG).

It belongs to the mycobacterial PE family. PGRS subfamily.

This is an uncharacterized protein from Mycobacterium bovis (strain ATCC BAA-935 / AF2122/97).